The sequence spans 353 residues: Probable cytochrome c oxidase subunit 2 (353 aa).

The signal sequence occupies residues 1–42 (MTARELVCSQRVGQGLSRRLRPLVLAVTLGVLVVTLSGCSWS). 2 consecutive transmembrane segments (helical) span residues 63-83 (LWIGAVVASLVVGVIVWGLIF) and 110-130 (LVLTVTPFLIISMLFYFTVIV). Positions 246, 287, 291, and 295 each coordinate Cu cation.

This sequence belongs to the cytochrome c oxidase subunit 2 family. It depends on Cu cation as a cofactor. Heme serves as cofactor.

The protein localises to the cell membrane. It carries out the reaction 4 Fe(II)-[cytochrome c] + O2 + 8 H(+)(in) = 4 Fe(III)-[cytochrome c] + 2 H2O + 4 H(+)(out). Functionally, subunits I and II form the functional core of the enzyme complex. Electrons originating in cytochrome c are transferred via heme a and Cu(A) to the binuclear center formed by heme a3 and Cu(B). This chain is Probable cytochrome c oxidase subunit 2 (ctaC), found in Mycobacterium leprae (strain TN).